Reading from the N-terminus, the 163-residue chain is uncharacterized protein (163 aa).

The interval 128–163 is disordered; that stretch reads PKKEKIKKAKRKKKGAKRASKKQKAKSKSARKSRRV. Residues 129 to 163 are compositionally biased toward basic residues; that stretch reads KKEKIKKAKRKKKGAKRASKKQKAKSKSARKSRRV.

This is an uncharacterized protein from Sulfurisphaera tokodaii (strain DSM 16993 / JCM 10545 / NBRC 100140 / 7) (Sulfolobus tokodaii).